The following is a 502-amino-acid chain: Glycerol kinase (502 aa).

Residue threonine 14 participates in ADP binding. Residues threonine 14, threonine 15, and serine 16 each contribute to the ATP site. Threonine 14 provides a ligand contact to sn-glycerol 3-phosphate. Arginine 18 contacts ADP. 3 residues coordinate sn-glycerol 3-phosphate: arginine 84, glutamate 85, and tyrosine 136. Residues arginine 84, glutamate 85, and tyrosine 136 each coordinate glycerol. Histidine 232 is modified (phosphohistidine; by HPr). Aspartate 246 is a binding site for sn-glycerol 3-phosphate. 2 residues coordinate glycerol: aspartate 246 and glutamine 247. ADP is bound by residues threonine 268 and glycine 311. 4 residues coordinate ATP: threonine 268, glycine 311, glutamine 315, and glycine 412. Glycine 412 and asparagine 416 together coordinate ADP.

The protein belongs to the FGGY kinase family. As to quaternary structure, homotetramer and homodimer (in equilibrium). Post-translationally, the phosphoenolpyruvate-dependent sugar phosphotransferase system (PTS), including enzyme I, and histidine-containing protein (HPr) are required for the phosphorylation, which leads to the activation of the enzyme.

The enzyme catalyses glycerol + ATP = sn-glycerol 3-phosphate + ADP + H(+). Its pathway is polyol metabolism; glycerol degradation via glycerol kinase pathway; sn-glycerol 3-phosphate from glycerol: step 1/1. With respect to regulation, activated by phosphorylation and inhibited by fructose 1,6-bisphosphate (FBP). In terms of biological role, key enzyme in the regulation of glycerol uptake and metabolism. Catalyzes the phosphorylation of glycerol to yield sn-glycerol 3-phosphate. This is Glycerol kinase from Streptococcus pneumoniae (strain Hungary19A-6).